We begin with the raw amino-acid sequence, 573 residues long: Proline--tRNA ligase (573 aa).

This sequence belongs to the class-II aminoacyl-tRNA synthetase family. ProS type 1 subfamily. In terms of assembly, homodimer.

The protein localises to the cytoplasm. The catalysed reaction is tRNA(Pro) + L-proline + ATP = L-prolyl-tRNA(Pro) + AMP + diphosphate. In terms of biological role, catalyzes the attachment of proline to tRNA(Pro) in a two-step reaction: proline is first activated by ATP to form Pro-AMP and then transferred to the acceptor end of tRNA(Pro). As ProRS can inadvertently accommodate and process non-cognate amino acids such as alanine and cysteine, to avoid such errors it has two additional distinct editing activities against alanine. One activity is designated as 'pretransfer' editing and involves the tRNA(Pro)-independent hydrolysis of activated Ala-AMP. The other activity is designated 'posttransfer' editing and involves deacylation of mischarged Ala-tRNA(Pro). The misacylated Cys-tRNA(Pro) is not edited by ProRS. This chain is Proline--tRNA ligase, found in Limosilactobacillus fermentum (strain NBRC 3956 / LMG 18251) (Lactobacillus fermentum).